A 388-amino-acid chain; its full sequence is S-adenosylmethionine synthase (388 aa).

His-17 provides a ligand contact to ATP. Asp-19 provides a ligand contact to Mg(2+). Glu-45 is a binding site for K(+). L-methionine-binding residues include Glu-58 and Gln-106. The segment at 106-116 (QSAHISQGVDR) is flexible loop. ATP-binding positions include 166–168 (DAK), Asp-241, 247–248 (RK), Ala-264, and Lys-268. Asp-241 contacts L-methionine. Lys-272 lines the L-methionine pocket.

Belongs to the AdoMet synthase family. As to quaternary structure, homotetramer; dimer of dimers. It depends on Mg(2+) as a cofactor. K(+) is required as a cofactor.

It is found in the cytoplasm. The enzyme catalyses L-methionine + ATP + H2O = S-adenosyl-L-methionine + phosphate + diphosphate. It functions in the pathway amino-acid biosynthesis; S-adenosyl-L-methionine biosynthesis; S-adenosyl-L-methionine from L-methionine: step 1/1. Its function is as follows. Catalyzes the formation of S-adenosylmethionine (AdoMet) from methionine and ATP. The overall synthetic reaction is composed of two sequential steps, AdoMet formation and the subsequent tripolyphosphate hydrolysis which occurs prior to release of AdoMet from the enzyme. The sequence is that of S-adenosylmethionine synthase from Paracoccus denitrificans (strain Pd 1222).